A 237-amino-acid chain; its full sequence is Carbonyl reductase family member 4 (237 aa).

NADP(+) contacts are provided by residues Ser11–Ile14, Arg34–Asn35, Asp57, and Ala84–Gly86. A substrate-binding site is contributed by Ser135. NADP(+)-binding positions include Tyr148, Lys152, and Ile181 to Thr183. Residue Tyr148 is the Proton acceptor of the active site.

It belongs to the short-chain dehydrogenases/reductases (SDR) family. Homotetramer (in vitro). Heterotetramer with HSD17B8; contains two molecules each of HSD17B8 and CBR4.

The protein resides in the mitochondrion matrix. The protein operates within lipid metabolism; fatty acid biosynthesis. Functionally, the heterotetramer with HSD17B8 has NADH-dependent 3-ketoacyl-acyl carrier protein reductase activity, and thereby plays a role in mitochondrial fatty acid biosynthesis. Within the heterotetramer, HSD17B8 binds NADH; CBR4 binds NADPD. The homotetramer has NADPH-dependent quinone reductase activity. Both homotetramer and the heterotetramer have broad in vitro substrate specificity and can reduce 9,10-phenanthrenequinone, 1,4-benzoquinone and various other o-quinones and p-quinones. The sequence is that of Carbonyl reductase family member 4 (cbr4) from Danio rerio (Zebrafish).